The primary structure comprises 79 residues: Cyclin-dependent kinases regulatory subunit 2 (79 aa).

The residue at position 4 (lysine 4) is an N6-acetyllysine.

The protein belongs to the CKS family. In terms of assembly, forms a homohexamer that can probably bind six kinase subunits.

In terms of biological role, binds to the catalytic subunit of the cyclin dependent kinases and is essential for their biological function. The protein is Cyclin-dependent kinases regulatory subunit 2 (Cks2) of Mus musculus (Mouse).